We begin with the raw amino-acid sequence, 287 residues long: ATP synthase gamma chain (287 aa).

The protein belongs to the ATPase gamma chain family. As to quaternary structure, F-type ATPases have 2 components, CF(1) - the catalytic core - and CF(0) - the membrane proton channel. CF(1) has five subunits: alpha(3), beta(3), gamma(1), delta(1), epsilon(1). CF(0) has three main subunits: a, b and c.

It is found in the cell membrane. Produces ATP from ADP in the presence of a proton gradient across the membrane. The gamma chain is believed to be important in regulating ATPase activity and the flow of protons through the CF(0) complex. In Halothermothrix orenii (strain H 168 / OCM 544 / DSM 9562), this protein is ATP synthase gamma chain.